Reading from the N-terminus, the 558-residue chain is Coiled-coil domain-containing protein 63 (558 aa).

Residues 1–26 (MPTKKHRRKDPESPQEPSEKTKEQLV) form a disordered region. The segment covering 9–26 (KDPESPQEPSEKTKEQLV) has biased composition (basic and acidic residues). Coiled-coil stretches lie at residues 48–289 (NFRS…KAKK) and 339–416 (VTEL…VENL). The disordered stretch occupies residues 531–558 (HYATRESRNRDSMPEKGDELKSKKKVTV). Basic and acidic residues predominate over residues 533–551 (ATRESRNRDSMPEKGDELK).

Functionally, plays a role in spermiogenesis. Involved in the elongation of flagella and the formation of sperm heads. The sequence is that of Coiled-coil domain-containing protein 63 from Bos taurus (Bovine).